The sequence spans 448 residues: Phosphoglucosamine mutase (448 aa).

Serine 104 (phosphoserine intermediate) is an active-site residue. Positions 104, 243, 245, and 247 each coordinate Mg(2+). Serine 104 is modified (phosphoserine).

It belongs to the phosphohexose mutase family. Requires Mg(2+) as cofactor. Post-translationally, activated by phosphorylation.

The catalysed reaction is alpha-D-glucosamine 1-phosphate = D-glucosamine 6-phosphate. Catalyzes the conversion of glucosamine-6-phosphate to glucosamine-1-phosphate. This chain is Phosphoglucosamine mutase, found in Xylella fastidiosa (strain 9a5c).